The following is a 118-amino-acid chain: Cell division protein FtsB (118 aa).

Residues 1 to 6 are Cytoplasmic-facing; that stretch reads MRNWRW. The chain crosses the membrane as a helical span at residues 7-24; that stretch reads LLLVLAALLSWLQHRFWF. Residues 25 to 118 lie on the Periplasmic side of the membrane; sequence GPGNSGEVRM…DLAQPRREKR (94 aa). Residues 30 to 66 are a coiled coil; sequence GEVRMLQVQIVQQHQENERLRQRNASLAAEVKNLKDG. The interval 97–118 is disordered; sequence PLPNDTSADHGVDLAQPRREKR. The segment covering 103 to 118 has biased composition (basic and acidic residues); sequence SADHGVDLAQPRREKR.

It belongs to the FtsB family. As to quaternary structure, part of a complex composed of FtsB, FtsL and FtsQ.

The protein resides in the cell inner membrane. Functionally, essential cell division protein. May link together the upstream cell division proteins, which are predominantly cytoplasmic, with the downstream cell division proteins, which are predominantly periplasmic. The sequence is that of Cell division protein FtsB from Xylella fastidiosa (strain 9a5c).